We begin with the raw amino-acid sequence, 126 residues long: Ribonuclease P protein component (126 aa).

The protein belongs to the RnpA family. Consists of a catalytic RNA component (M1 or rnpB) and a protein subunit.

It catalyses the reaction Endonucleolytic cleavage of RNA, removing 5'-extranucleotides from tRNA precursor.. RNaseP catalyzes the removal of the 5'-leader sequence from pre-tRNA to produce the mature 5'-terminus. It can also cleave other RNA substrates such as 4.5S RNA. The protein component plays an auxiliary but essential role in vivo by binding to the 5'-leader sequence and broadening the substrate specificity of the ribozyme. The protein is Ribonuclease P protein component of Rhodococcus erythropolis (strain PR4 / NBRC 100887).